The following is a 522-amino-acid chain: 2-isopropylmalate synthase (522 aa).

A Pyruvate carboxyltransferase domain is found at 5 to 267 (VIIFDTTLRD…DCGINAKEIH (263 aa)). D14, H202, H204, and N238 together coordinate Mn(2+). The regulatory domain stretch occupies residues 392-522 (QLQHMMVHSD…IHKERELGGV (131 aa)).

This sequence belongs to the alpha-IPM synthase/homocitrate synthase family. LeuA type 1 subfamily. In terms of assembly, homodimer. The cofactor is Mn(2+).

The protein localises to the cytoplasm. The enzyme catalyses 3-methyl-2-oxobutanoate + acetyl-CoA + H2O = (2S)-2-isopropylmalate + CoA + H(+). It participates in amino-acid biosynthesis; L-leucine biosynthesis; L-leucine from 3-methyl-2-oxobutanoate: step 1/4. Functionally, catalyzes the condensation of the acetyl group of acetyl-CoA with 3-methyl-2-oxobutanoate (2-ketoisovalerate) to form 3-carboxy-3-hydroxy-4-methylpentanoate (2-isopropylmalate). The polypeptide is 2-isopropylmalate synthase (Shewanella frigidimarina (strain NCIMB 400)).